The sequence spans 589 residues: C-type lectin domain family 4 member F (589 aa).

At 1–39 (MDGEAVRFCTDNQCVSLHPQEVDSVAMAPAAPKIPRLVQ) the chain is on the cytoplasmic side. Residues 40 to 60 (ATPAFMAVTLVFSLVTLFVVV) form a helical; Signal-anchor for type II membrane protein membrane-spanning segment. Residues 61 to 589 (QQQTRPVPKP…TPPCPWILSN (529 aa)) lie on the Extracellular side of the membrane. Residues Asn-79, Asn-113, Asn-207, Asn-230, Asn-244, Asn-312, Asn-385, and Asn-399 are each glycosylated (N-linked (GlcNAc...) asparagine). The region spanning 476–589 (NGGSLYYFSS…TPPCPWILSN (114 aa)) is the C-type lectin domain.

Its subcellular location is the membrane. Functionally, receptor with an affinity for galactose and fucose. Could be involved in endocytosis. The polypeptide is C-type lectin domain family 4 member F (CLEC4F) (Homo sapiens (Human)).